Reading from the N-terminus, the 143-residue chain is Cytochrome c-type biogenesis protein CcmE (143 aa).

Residues 1 to 8 lie on the Cytoplasmic side of the membrane; it reads MTPVRRRK. A helical; Signal-anchor for type II membrane protein transmembrane segment spans residues 9 to 29; the sequence is LFILLFALSVLSAAAALVLYA. Over 30–143 the chain is Periplasmic; it reads LRQNISLFYT…KSALADKVKQ (114 aa). Heme is bound by residues histidine 124 and tyrosine 128.

Belongs to the CcmE/CycJ family.

It is found in the cell inner membrane. In terms of biological role, heme chaperone required for the biogenesis of c-type cytochromes. Transiently binds heme delivered by CcmC and transfers the heme to apo-cytochromes in a process facilitated by CcmF and CcmH. This Legionella pneumophila protein is Cytochrome c-type biogenesis protein CcmE.